Reading from the N-terminus, the 276-residue chain is MHPAAEHSPLGKSSEYIATYTPSLLFPIPRAAKWAELGLTAQTLPYQGVDFWNCYELSWLLPSGKPVVAIGEFSIPAESPNIIESKSFKLYLNSLNQTAFATVEQLQTTLEQDLSAAAGKPVGVRIRSLAEIEEEGVAALPGVCIDDLDISVSSYDRPQPELLCCDDSRVVAESVHSHLLKSNCPVTSQPDWGSVVVEYRGAALDHASLLAYIVSFRQHSDFHEQCVERIFLDLQRLLKPEKLTVYARYVRRGGLDINPYRSTETLDVDNRRLARQ.

83–85 (IES) contributes to the substrate binding site. NADPH is bound at residue 85-86 (SK). The active-site Thioimide intermediate is C184. Residue D191 is the Proton donor of the active site. 223–224 (HE) is a substrate binding site. 252-253 (RG) serves as a coordination point for NADPH.

Belongs to the GTP cyclohydrolase I family. QueF type 2 subfamily. Homodimer.

The protein resides in the cytoplasm. It catalyses the reaction 7-aminomethyl-7-carbaguanine + 2 NADP(+) = 7-cyano-7-deazaguanine + 2 NADPH + 3 H(+). Its pathway is tRNA modification; tRNA-queuosine biosynthesis. Catalyzes the NADPH-dependent reduction of 7-cyano-7-deazaguanine (preQ0) to 7-aminomethyl-7-deazaguanine (preQ1). The protein is NADPH-dependent 7-cyano-7-deazaguanine reductase of Pseudomonas syringae pv. syringae (strain B728a).